The primary structure comprises 1482 residues: Chromosome partition protein MukB (1482 aa).

34–41 (GGNGAGKS) is a binding site for ATP. Coiled coils occupy residues 326–416 (LEAD…AIQY), 509–603 (RHLA…RAPV), 780–805 (RAAR…ATLS), 835–923 (EAEI…AKLE), 979–1116 (LSGN…AKAG), and 1210–1265 (EAIE…LQSV). Positions 666 to 783 (PGGAEDSRLN…TLPLFGRAAR (118 aa)) are flexible hinge.

It belongs to the SMC family. MukB subfamily. In terms of assembly, homodimerization via its hinge domain. Binds to DNA via its C-terminal region. Interacts, and probably forms a ternary complex, with MukE and MukF via its C-terminal region. The complex formation is stimulated by calcium or magnesium. Interacts with tubulin-related protein FtsZ.

It is found in the cytoplasm. The protein localises to the nucleoid. In terms of biological role, plays a central role in chromosome condensation, segregation and cell cycle progression. Functions as a homodimer, which is essential for chromosome partition. Involved in negative DNA supercoiling in vivo, and by this means organize and compact chromosomes. May achieve or facilitate chromosome segregation by condensation DNA from both sides of a centrally located replisome during cell division. The polypeptide is Chromosome partition protein MukB (Enterobacter sp. (strain 638)).